The chain runs to 159 residues: 17 kDa surface antigen (159 aa).

Residues 1 to 19 (MKLLSKIMIIALAASMLQA) form the signal peptide. The N-palmitoyl cysteine moiety is linked to residue Cys20. A lipid anchor (S-diacylglycerol cysteine) is attached at Cys20.

This sequence belongs to the rickettsiale 17 kDa surface antigen family.

The protein localises to the cell outer membrane. This chain is 17 kDa surface antigen (omp), found in Rickettsia felis (strain ATCC VR-1525 / URRWXCal2) (Rickettsia azadi).